Here is a 272-residue protein sequence, read N- to C-terminus: Large ribosomal subunit protein uL2 (272 aa).

Positions 247-272 (PWGQPCKGFKTRNNKRTNSSIIKRRK) are disordered. A compositionally biased stretch (polar residues) spans 262–272 (RTNSSIIKRRK).

The protein belongs to the universal ribosomal protein uL2 family. In terms of assembly, part of the 50S ribosomal subunit. Forms a bridge to the 30S subunit in the 70S ribosome.

One of the primary rRNA binding proteins. Required for association of the 30S and 50S subunits to form the 70S ribosome, for tRNA binding and peptide bond formation. It has been suggested to have peptidyltransferase activity; this is somewhat controversial. Makes several contacts with the 16S rRNA in the 70S ribosome. This is Large ribosomal subunit protein uL2 from Bdellovibrio bacteriovorus (strain ATCC 15356 / DSM 50701 / NCIMB 9529 / HD100).